Reading from the N-terminus, the 233-residue chain is Ubiquitin carboxyl-terminal hydrolase isozyme L4 (233 aa).

In terms of domain architecture, UCH catalytic spans 5–232; the sequence is RWLPLEANPE…LRFNAIALSA (228 aa). Residues 8 to 13 are interaction with ubiquitin; that stretch reads PLEANP. The Nucleophile role is filled by Cys95. A Phosphoserine modification is found at Ser133. Residue His172 is the Proton donor of the active site. Positions 222-227 are interaction with ubiquitin; sequence ELRFNA.

Belongs to the peptidase C12 family. Expressed in various tissues at low level.

It is found in the cytoplasm. It catalyses the reaction Thiol-dependent hydrolysis of ester, thioester, amide, peptide and isopeptide bonds formed by the C-terminal Gly of ubiquitin (a 76-residue protein attached to proteins as an intracellular targeting signal).. Ubiquitin-protein hydrolase is involved both in the processing of ubiquitin precursors and of ubiquitinated proteins. This enzyme is a thiol protease that recognizes and hydrolyzes a peptide bond at the C-terminal glycine of ubiquitin. The chain is Ubiquitin carboxyl-terminal hydrolase isozyme L4 (Uchl4) from Mus musculus (Mouse).